The sequence spans 150 residues: 3-hydroxyacyl-[acyl-carrier-protein] dehydratase FabZ (150 aa).

Histidine 52 is an active-site residue.

This sequence belongs to the thioester dehydratase family. FabZ subfamily.

Its subcellular location is the cytoplasm. It carries out the reaction a (3R)-hydroxyacyl-[ACP] = a (2E)-enoyl-[ACP] + H2O. In terms of biological role, involved in unsaturated fatty acids biosynthesis. Catalyzes the dehydration of short chain beta-hydroxyacyl-ACPs and long chain saturated and unsaturated beta-hydroxyacyl-ACPs. This chain is 3-hydroxyacyl-[acyl-carrier-protein] dehydratase FabZ, found in Variovorax paradoxus (strain S110).